The primary structure comprises 697 residues: Pentatricopeptide repeat-containing protein At5g46460, mitochondrial (697 aa).

A mitochondrion-targeting transit peptide spans 1-36; it reads MWSRAIFQRFRFRAFSISHVIHGKCYRSFSVTVEFQ. 14 PPR repeats span residues 39 to 64, 65 to 95, 96 to 130, 131 to 157, 158 to 192, 193 to 223, 224 to 258, 259 to 289, 290 to 324, 325 to 359, 360 to 390, 391 to 425, 426 to 456, and 463 to 497; these read EVLI…VPSP, HVSL…MPVR, DVVS…SVVS, WTAM…MPVK, DTAA…NVIS, WTTM…CIKS, TSRP…GFLY, EEYV…KVHE, QVAV…SILP, NQST…GLET, DAFV…IFKK, SIVS…NKEP, DEIT…MSSG, and KIQH…PNEM. The type E motif stretch occupies residues 498–573; that stretch reads VWLALLSACR…KPGSSWVVIR (76 aa). The segment at 574-602 is type E(+) motif; the sequence is GKKHEFFSGDQPHCSRIYEKLEFLREKLK. Positions 603–697 are type DYW motif; sequence ELGYAPDYRS…NGTCSCGDYW (95 aa).

Belongs to the PPR family. PCMP-H subfamily.

Its subcellular location is the mitochondrion. The polypeptide is Pentatricopeptide repeat-containing protein At5g46460, mitochondrial (PCMP-H49) (Arabidopsis thaliana (Mouse-ear cress)).